We begin with the raw amino-acid sequence, 95 residues long: Small ubiquitin-related modifier 2 (95 aa).

Residue methionine 1 forms a Peptide (Met-Gly) (interchain with G-Cter in ubiquitin) linkage. Residues lysine 5 and lysine 7 each participate in a glycyl lysine isopeptide (Lys-Gly) (interchain with G-Cter in SUMO2) cross-link. At lysine 11 the chain carries N6-acetyllysine; alternate. Lysine 11 is covalently cross-linked (Glycyl lysine isopeptide (Lys-Gly) (interchain with G-Cter in SUMO); alternate). Residue lysine 11 forms a Glycyl lysine isopeptide (Lys-Gly) (interchain with G-Cter in SUMO1); alternate linkage. Residue lysine 11 forms a Glycyl lysine isopeptide (Lys-Gly) (interchain with G-Cter in SUMO2); alternate linkage. Lysine 11 is covalently cross-linked (Glycyl lysine isopeptide (Lys-Gly) (interchain with G-Cter in ubiquitin); alternate). A Ubiquitin-like domain is found at 16-95 (DHINLKVAGQ…VFQQQTGGVY (80 aa)). Lysine 21 is covalently cross-linked (Glycyl lysine isopeptide (Lys-Gly) (interchain with G-Cter in SUMO2)). Glycine 93 is covalently cross-linked (Glycyl lysine isopeptide (Gly-Lys) (interchain with K-? in acceptor proteins)). Positions 94–95 (VY) are excised as a propeptide.

Belongs to the ubiquitin family. SUMO subfamily. Interacts with SAE2 and UBE2I. Interacts with ZNF451. Identified in a complex with ZNF451 and UBE2I/UBC9, where one ZNF451 interacts with one UBE2I/UBC9 and two SUMO2 chains, one bound to the UBE2I/UBC9 active site and the other to another region of the same UBE2I/UBC9 molecule. Covalently attached to a number of proteins. Interacts with PELP1. Interacts with USP25; the interaction sumoylates USP25. Interacts with SIMC1, CASP8AP2, RNF111 and SOBP (via SIM domains). Interacts with MTA1. Interacts with HINT1. Interacts with GCNA (via SIM domains); this interaction allows the GCNA recruitment to DPCs sites. In terms of processing, polymeric chains can be formed through Lys-11 cross-linking. Polymeric SUMO2 chains undergo 'Lys-6'-, 'Lys-11'-, 'Lys-48'- and 'Lys-63'-linked polyubiquitination by RNF4. Post-translationally, cleavage of precursor form by SENP1 or SENP2 is necessary for function. Monoubiquitinated N-terminally by UBE2W, which primes it for RNF4-dependent polyubiquitination by the UBE2V1-UBE2N heterodimer.

It is found in the nucleus. Its subcellular location is the PML body. Functionally, ubiquitin-like protein that can be covalently attached to proteins as a monomer or as a lysine-linked polymer. Covalent attachment via an isopeptide bond to its substrates requires prior activation by the E1 complex SAE1-SAE2 and linkage to the E2 enzyme UBE2I, and can be promoted by an E3 ligase such as PIAS1-4, RANBP2 or CBX4. This post-translational modification on lysine residues of proteins plays a crucial role in a number of cellular processes such as nuclear transport, DNA replication and repair, mitosis and signal transduction. Polymeric SUMO2 chains are also susceptible to polyubiquitination which functions as a signal for proteasomal degradation of modified proteins. Plays a role in the regulation of sumoylation status of SETX. This is Small ubiquitin-related modifier 2 from Bos taurus (Bovine).